The sequence spans 331 residues: Ketol-acid reductoisomerase (NADP(+)) (331 aa).

Positions 4-183 (ATIYYDDDAE…GCTRAGVVET (180 aa)) constitute a KARI N-terminal Rossmann domain. NADP(+)-binding positions include 27–30 (YGSQ), Arg-50, Ser-53, Ser-55, and 85–88 (DTVQ). His-109 is an active-site residue. Gly-135 is a binding site for NADP(+). In terms of domain architecture, KARI C-terminal knotted spans 184–329 (TFREETETDL…EDLRALFAWG (146 aa)). 4 residues coordinate Mg(2+): Asp-192, Glu-196, Glu-228, and Glu-232. Ser-253 is a substrate binding site.

Belongs to the ketol-acid reductoisomerase family. Mg(2+) serves as cofactor.

The enzyme catalyses (2R)-2,3-dihydroxy-3-methylbutanoate + NADP(+) = (2S)-2-acetolactate + NADPH + H(+). The catalysed reaction is (2R,3R)-2,3-dihydroxy-3-methylpentanoate + NADP(+) = (S)-2-ethyl-2-hydroxy-3-oxobutanoate + NADPH + H(+). It participates in amino-acid biosynthesis; L-isoleucine biosynthesis; L-isoleucine from 2-oxobutanoate: step 2/4. The protein operates within amino-acid biosynthesis; L-valine biosynthesis; L-valine from pyruvate: step 2/4. Functionally, involved in the biosynthesis of branched-chain amino acids (BCAA). Catalyzes an alkyl-migration followed by a ketol-acid reduction of (S)-2-acetolactate (S2AL) to yield (R)-2,3-dihydroxy-isovalerate. In the isomerase reaction, S2AL is rearranged via a Mg-dependent methyl migration to produce 3-hydroxy-3-methyl-2-ketobutyrate (HMKB). In the reductase reaction, this 2-ketoacid undergoes a metal-dependent reduction by NADPH to yield (R)-2,3-dihydroxy-isovalerate. The chain is Ketol-acid reductoisomerase (NADP(+)) from Natronomonas pharaonis (strain ATCC 35678 / DSM 2160 / CIP 103997 / JCM 8858 / NBRC 14720 / NCIMB 2260 / Gabara) (Halobacterium pharaonis).